The primary structure comprises 343 residues: MADKKKLLRSLAGEAMDVPPVWLMRQAGRYLPEYRATRAQAGDFLSLCYNPELAAEVTLQPIRRFDFDASILFADILLIPQALGANLWFVTGEGPRLSTITDASGMARMKTADDIHETLNPIYETVKILAQELPKETTLIGFAGAPWTVATYMIAGRGTPDQAPAHKLREGDPETFDKLMDLITAATIEYLDMQVQAGAEVVKLFDSWAGSLKGEAFDKYALAPAKRIISELKSRHPDLPIIAFPREAGEKYIGFANAVGADCLAIDTSVDAIWAAENLQTDGCVQGNLDPKLMVTGGEALASEARRIRDALKGGPHIFNLGHGITPDADPENVHILLDAIRS.

Substrate contacts are provided by residues arginine 25–arginine 29, aspartate 75, tyrosine 152, serine 207, and histidine 323.

This sequence belongs to the uroporphyrinogen decarboxylase family. As to quaternary structure, homodimer.

It localises to the cytoplasm. It catalyses the reaction uroporphyrinogen III + 4 H(+) = coproporphyrinogen III + 4 CO2. The protein operates within porphyrin-containing compound metabolism; protoporphyrin-IX biosynthesis; coproporphyrinogen-III from 5-aminolevulinate: step 4/4. In terms of biological role, catalyzes the decarboxylation of four acetate groups of uroporphyrinogen-III to yield coproporphyrinogen-III. The chain is Uroporphyrinogen decarboxylase from Jannaschia sp. (strain CCS1).